The chain runs to 199 residues: Inner membrane-spanning protein YciB (199 aa).

Transmembrane regions (helical) follow at residues leucine 3–tyrosine 23, valine 47–leucine 67, tryptophan 76–phenylalanine 96, leucine 119–tyrosine 139, and phenylalanine 149–methionine 169. A disordered region spans residues alanine 180–proline 199.

The protein belongs to the YciB family.

It localises to the cell inner membrane. Functionally, plays a role in cell envelope biogenesis, maintenance of cell envelope integrity and membrane homeostasis. This is Inner membrane-spanning protein YciB from Delftia acidovorans (strain DSM 14801 / SPH-1).